Here is an 841-residue protein sequence, read N- to C-terminus: ATP-dependent helicase Lhr-Core (841 aa).

ATP-binding residues include Q39, K62, T63, D181, E182, I352, R369, and H372. The Helicase ATP-binding domain occupies 43 to 234; sequence IKEIHEGKNV…FLVGNGRDCY (192 aa). Positions 181–184 match the DEVH box motif; sequence DEIH. The 151-residue stretch at 266–416 folds into the Helicase C-terminal domain; the sequence is RLYNLLKKLI…RIHIPKNCLD (151 aa). The interval 417-500 is WH domain; it reads VLAQHLVGMA…IYYMNVGTIP (84 aa). Residues 501-841 are domain 4; the sequence is DETAVDVIAD…MEFISMKGKK (341 aa).

Belongs to the Lhr helicase family. Lhr-Core subfamily. As to quaternary structure, monomer.

The catalysed reaction is Couples ATP hydrolysis with the unwinding of duplex DNA by translocating in the 3'-5' direction.. It carries out the reaction ATP + H2O = ADP + phosphate + H(+). Functionally, DNA helicase that loads on single-stranded (ss)DNA and translocates in a 3'-5' direction, probably involved in DNA repair. Archaeal orthologs have double-stranded (ds)DNA and/or RNA:DNA helicase activity. The chain is ATP-dependent helicase Lhr-Core from Methanocaldococcus jannaschii (strain ATCC 43067 / DSM 2661 / JAL-1 / JCM 10045 / NBRC 100440) (Methanococcus jannaschii).